The primary structure comprises 446 residues: Lysine histidine transporter 1 (446 aa).

Over 1 to 37 (MVAQAPHDDHQDDEKLAAARQKEIEDWLPITSSRNAK) the chain is Cytoplasmic. The helical transmembrane segment at 38-58 (WWYSAFHNVTAMVGAGVLGLP) threads the bilayer. The Extracellular segment spans residues 59 to 63 (YAMSQ). A helical membrane pass occupies residues 64 to 84 (LGWGPGIAVLVLSWVITLYTL). At 85-115 (WQMVEMHEMVPGKRFDRYHELGQHAFGEKLG) the chain is on the cytoplasmic side. Residues 116–136 (LYIVVPQQLIVEIGVCIVYMV) form a helical membrane-spanning segment. Over 137 to 157 (TGGKSLKKFHELVCDDCKPIK) the chain is Extracellular. A helical membrane pass occupies residues 158–178 (LTYFIMIFASVHFVLSHLPNF). At 179 to 180 (NS) the chain is on the cytoplasmic side. The chain crosses the membrane as a helical span at residues 181 to 201 (ISGVSLAAAVMSLSYSTIAWA). Residues 202-227 (SSASKGVQEDVQYGYKAKTTAGTVFN) are Extracellular-facing. The chain crosses the membrane as a helical span at residues 228–248 (FFSGLGDVAFAYAGHNVVLEI). The Cytoplasmic portion of the chain corresponds to 249–268 (QATIPSTPEKPSKGPMWRGV). Residues 269 to 289 (IVAYIVVALCYFPVALVGYYI) form a helical membrane-spanning segment. Topologically, residues 290-305 (FGNGVEDNILMSLKKP) are extracellular. The helical transmembrane segment at 306–326 (AWLIATANIFVVIHVIGSYQI) threads the bilayer. Residues 327–352 (YAMPVFDMMETLLVKKLNFRPTTTLR) lie on the Cytoplasmic side of the membrane. Residues 353–375 (FFVRNFYVAATMFVGMTFPFFGG) form a helical membrane-spanning segment. Over 376 to 378 (LLA) the chain is Extracellular. The helical transmembrane segment at 379-401 (FFGGFAFAPTTYFLPCVIWLAIY) threads the bilayer. Over 402 to 409 (KPKKYSLS) the chain is Cytoplasmic. The helical transmembrane segment at 410–430 (WWANWVCIVFGLFLMVLSPIG) threads the bilayer. Over 431 to 446 (GLRTIVIQAKGYKFYS) the chain is Extracellular.

The protein belongs to the amino acid/polyamine transporter 2 family. Amino acid/auxin permease (AAAP) (TC 2.A.18.2) subfamily. Expressed in roots, stems, flowers, leaves, siliques and pollen. Found in the tips of roots and in the rhizodermis of emerging roots and in lateral roots. Higher expression in older leaves as compared to joung leaves. Detected first at the hydathodes, then in the epidermis and finally in matures leaves in all mesophyll cells. Not detected in vascular bundles or in seeds.

It localises to the cell membrane. Its activity is regulated as follows. Inhibited by carbonlycyanide m-chlorophenylhydrazone (CCCP) and DEPC. Its function is as follows. Amino acid-proton symporter. Transporter with a broad specificity for histidine, lysine, glutamic acid, alanine, serine, proline and glycine. Involved in both apoplastic transport of amino acids in leaves and their uptake by roots. In Arabidopsis thaliana (Mouse-ear cress), this protein is Lysine histidine transporter 1 (LHT1).